A 141-amino-acid chain; its full sequence is Nucleoside diphosphate kinase (141 aa).

6 residues coordinate ATP: lysine 11, phenylalanine 59, arginine 87, threonine 93, arginine 104, and asparagine 114. The Pros-phosphohistidine intermediate role is filled by histidine 117.

The protein belongs to the NDK family. Homotetramer. Mg(2+) serves as cofactor.

The protein resides in the cytoplasm. It catalyses the reaction a 2'-deoxyribonucleoside 5'-diphosphate + ATP = a 2'-deoxyribonucleoside 5'-triphosphate + ADP. The catalysed reaction is a ribonucleoside 5'-diphosphate + ATP = a ribonucleoside 5'-triphosphate + ADP. Its function is as follows. Major role in the synthesis of nucleoside triphosphates other than ATP. The ATP gamma phosphate is transferred to the NDP beta phosphate via a ping-pong mechanism, using a phosphorylated active-site intermediate. This Cellvibrio japonicus (strain Ueda107) (Pseudomonas fluorescens subsp. cellulosa) protein is Nucleoside diphosphate kinase.